We begin with the raw amino-acid sequence, 383 residues long: AP-1-like transcription factor YAP6 (383 aa).

Disordered regions lie at residues methionine 1–asparagine 64, aspartate 83–arginine 113, and threonine 168–arginine 239. Residues asparagine 13–asparagine 64 show a composition bias toward polar residues. Over residues histidine 88–histidine 101 the composition is skewed to low complexity. The span at threonine 168–glutamine 184 shows a compositional bias: polar residues. A compositionally biased stretch (low complexity) spans asparagine 185–proline 206. Over residues glutamine 213–leucine 222 the composition is skewed to polar residues. One can recognise a bZIP domain in the interval threonine 221–histidine 284. The interval arginine 223 to lysine 247 is basic motif. Low complexity predominate over residues arginine 227 to alanine 237. The leucine-zipper stretch occupies residues leucine 249–asparagine 277.

The protein belongs to the bZIP family. YAP subfamily. In terms of assembly, homodimer.

It localises to the nucleus. In terms of biological role, transcription activator involved in the regulation of genes expressed in response to environmental changes and metabolic requirements. According to genome-wide promoter binding and gene expression studies it regulates, among others, genes involved in ribosome biogenesis, protein synthesis, carbohydrate metabolism, and carbohydrate transport. It may also be involved in pleiotropic drug resistance. When overexpressed, it confers resistance to cisplatin, methylmethanosulfonate, and mitomycin C, and increases cellular tolerance to sodium and lithium. In Saccharomyces cerevisiae (strain ATCC 204508 / S288c) (Baker's yeast), this protein is AP-1-like transcription factor YAP6 (YAP6).